The following is a 53-amino-acid chain: Ferredoxin B (53 aa).

Positions 1-35 are N-terminal extension; that stretch reads GIDPNYRSLPVVKEEQGVKIYGTYEPPTKLGIWGT. At lysine 29 the chain carries N6-methyllysine. Positions 34-53 constitute a 4Fe-4S ferredoxin-type 1 domain; the sequence is GTIVGVDFDLCIADGSCINA. [3Fe-4S] cluster-binding residues include cysteine 44 and cysteine 50.

Requires [3Fe-4S] cluster as cofactor. The cofactor is [4Fe-4S] cluster.

Its function is as follows. Ferredoxins are iron-sulfur proteins that transfer electrons in a wide variety of metabolic reactions. The protein is Ferredoxin B of Sulfuracidifex metallicus (Sulfolobus metallicus).